A 453-amino-acid polypeptide reads, in one-letter code: Glutamyl-tRNA reductase (453 aa).

Substrate-binding positions include 54-57, Ser-113, 118-120, and Gln-124; these read TCNR and EAQ. Cys-55 acts as the Nucleophile in catalysis. 193–198 is an NADP(+) binding site; that stretch reads GGGEVS.

Belongs to the glutamyl-tRNA reductase family. As to quaternary structure, homodimer.

The enzyme catalyses (S)-4-amino-5-oxopentanoate + tRNA(Glu) + NADP(+) = L-glutamyl-tRNA(Glu) + NADPH + H(+). It functions in the pathway porphyrin-containing compound metabolism; protoporphyrin-IX biosynthesis; 5-aminolevulinate from L-glutamyl-tRNA(Glu): step 1/2. It participates in porphyrin-containing compound metabolism; chlorophyll biosynthesis. Its function is as follows. Catalyzes the NADPH-dependent reduction of glutamyl-tRNA(Glu) to glutamate 1-semialdehyde (GSA). This is Glutamyl-tRNA reductase from Chloroflexus aggregans (strain MD-66 / DSM 9485).